The primary structure comprises 393 residues: MPKKKPTPIQLNPAPDGSAVNGTSSAETNLEALQKKLEELELDEQQRKRLEAFLTQKQKVGELKDDDFEKISELGAGNGGVVFKVSHKPSGLVMARKLIHLEIKPAIRNQIIRELQVLHECNSPYIVGFYGAFYSDGEISICMEHMDGGSLDQVLKKAGRIPEQILGKVSIAVIKGLTYLREKHKIMHRDVKPSNILVNSRGEIKLCDFGVSGQLIDSMANSFVGTRSYMSPERLQGTHYSVQSDIWSMGLSLVEMAVGRYPIPPPDAKELELMFGCQVEGDAAETPPRPRTPGRPLSSYGMDSRPPMAIFELLDYIVNEPPPKLPSGVFSLEFQDFVNKCLIKNPAERADLKQLMVHAFIKRSDAEEVDFAGWLCSTIGLNQPSTPTHAAGV.

Residues 1–27 (MPKKKPTPIQLNPAPDGSAVNGTSSAE) are disordered. The Protein kinase domain maps to 68 to 361 (FEKISELGAG…LKQLMVHAFI (294 aa)). Residues 74–82 (LGAGNGGVV), Lys97, 143–146 (MEHM), and 150–153 (SLDQ) contribute to the ATP site. Lys97 is a binding site for U0126. 144–146 (EHM) is a binding site for K-252a. Catalysis depends on Asp190, which acts as the Proton acceptor. ATP-binding positions include 192-195 (KPSN) and Asp208. Residue Ser194 coordinates K-252a. 208 to 211 (DFGV) is a binding site for U0126. Phosphoserine; by BRAF and RAF1 is present on residues Ser218 and Ser222. The segment at 270-307 (ELELMFGCQVEGDAAETPPRPRTPGRPLSSYGMDSRPP) is RAF1-binding. Thr286 bears the Phosphothreonine mark. Phosphothreonine; by MAPK1 is present on Thr292. The residue at position 298 (Ser298) is a Phosphoserine; by PAK.

This sequence belongs to the protein kinase superfamily. STE Ser/Thr protein kinase family. MAP kinase kinase subfamily. In terms of assembly, found in a complex with at least BRAF, HRAS, MAP2K1, MAPK3/ERK1 and RGS14. Forms a heterodimer with MAP2K2/MEK2. Forms heterodimers with KSR2 which further dimerize to form tetramers. Interacts with KSR1 or KSR2 and BRAF; the interaction with KSR1 or KSR2 mediates KSR1-BRAF or KSR2-BRAF dimerization. Interacts with ARBB2, LAMTOR3 and RAF1. Interacts with MAPK1/ERK2. Interacts with MORG1. Interacts with PPARG. Interacts with isoform 1 of VRK2. Interacts with SGK1. Interacts with BIRC6/bruce. Interacts with KAT7; the interaction promotes KAT7 phosphorylation. Interacts with RAF1 and NEK10; the interaction is required for ERK1/2-signaling pathway activation in response to UV irradiation. Interacts with TRAF3IP3. Interacts with MOS. (Microbial infection) Interacts with Yersinia YopJ. Post-translationally, phosphorylation at Ser-218 and Ser-222 by MAP kinase kinase kinases (BRAF or MEKK1) positively regulates kinase activity. Also phosphorylated at Thr-292 by MAPK1/ERK2 and at Ser-298 by PAK. MAPK1/ERK2 phosphorylation of Thr-292 occurs in response to cellular adhesion and leads to inhibition of Ser-298 phosphorylation by PAK. Autophosphorylated at Ser-218 and Ser-222, autophosphosphorylation is promoted by NEK10 following UV irradiation. (Microbial infection) Acetylation by Yersinia YopJ prevents phosphorylation and activation, thus blocking the MAPK signaling pathway. As to expression, widely expressed, with extremely low levels in brain.

The protein localises to the cytoplasm. Its subcellular location is the cytoskeleton. The protein resides in the microtubule organizing center. It is found in the centrosome. It localises to the spindle pole body. The protein localises to the nucleus. Its subcellular location is the membrane. The catalysed reaction is L-seryl-[protein] + ATP = O-phospho-L-seryl-[protein] + ADP + H(+). It catalyses the reaction L-threonyl-[protein] + ATP = O-phospho-L-threonyl-[protein] + ADP + H(+). It carries out the reaction L-tyrosyl-[protein] + ATP = O-phospho-L-tyrosyl-[protein] + ADP + H(+). Ras proteins such as HRAS mediate the activation of RAF proteins such as RAF1 or BRAF which in turn activate extracellular signal-regulated kinases (ERK) through MAPK (mitogen-activated protein kinases) and ERK kinases MAP2K1/MEK1 and MAP2K2/MEK2. Activation occurs through phosphorylation of Ser-218 and Ser-222. MAP2K1/MEK1 binds KSR1 or KSR2 releasing the inhibitory intramolecular interaction between KSR1 or KSR2 protein kinase and N-terminal domains. This allows KSR1 or KSR2 dimerization with BRAF leading to BRAF activation and phosphorylation of MAP2K1. MAP2K1/MEK1 is also the target of negative feed-back regulation by its substrate kinases, such as MAPK1/ERK2. These phosphorylate MAP2K1/MEK1 on Thr-292, thereby facilitating dephosphorylation of the activating residues Ser-218 and Ser-222. Inhibited by serine/threonine phosphatase 2A. Many inhibitors have been identified including pyrrole derivatives, TAK-733 (one of a series of 8-methylpyrido[2,3-d]pyrimidine-4,7(3H,8H)-dione derivatives), CH4987655 and RDEA119/BAY 869766. In terms of biological role, dual specificity protein kinase which acts as an essential component of the MAP kinase signal transduction pathway. Binding of extracellular ligands such as growth factors, cytokines and hormones to their cell-surface receptors activates RAS and this initiates RAF1 activation. RAF1 then further activates the dual-specificity protein kinases MAP2K1/MEK1 and MAP2K2/MEK2. Both MAP2K1/MEK1 and MAP2K2/MEK2 function specifically in the MAPK/ERK cascade, and catalyze the concomitant phosphorylation of a threonine and a tyrosine residue in a Thr-Glu-Tyr sequence located in the extracellular signal-regulated kinases MAPK3/ERK1 and MAPK1/ERK2, leading to their activation and further transduction of the signal within the MAPK/ERK cascade. Activates BRAF in a KSR1 or KSR2-dependent manner; by binding to KSR1 or KSR2 releases the inhibitory intramolecular interaction between KSR1 or KSR2 protein kinase and N-terminal domains which promotes KSR1 or KSR2-BRAF dimerization and BRAF activation. Depending on the cellular context, this pathway mediates diverse biological functions such as cell growth, adhesion, survival and differentiation, predominantly through the regulation of transcription, metabolism and cytoskeletal rearrangements. One target of the MAPK/ERK cascade is peroxisome proliferator-activated receptor gamma (PPARG), a nuclear receptor that promotes differentiation and apoptosis. MAP2K1/MEK1 has been shown to export PPARG from the nucleus. The MAPK/ERK cascade is also involved in the regulation of endosomal dynamics, including lysosome processing and endosome cycling through the perinuclear recycling compartment (PNRC), as well as in the fragmentation of the Golgi apparatus during mitosis. The polypeptide is Dual specificity mitogen-activated protein kinase kinase 1 (Homo sapiens (Human)).